Here is a 140-residue protein sequence, read N- to C-terminus: Ribonucleases P/MRP protein subunit POP7 (140 aa).

The segment at 1-21 (MALKKNTHNKSTKRVTKHPSL) is disordered. S115 carries the phosphoserine modification.

The protein belongs to the histone-like Alba family. As to quaternary structure, component of nuclear RNase P and RNase MRP complexes. RNase P consists of an RNA moiety and at least 9 protein subunits including POP1, POP3, POP4, POP5, POP6, POP7, POP8, RPP1 and RPR2. RNase MRP complex consists of an RNA moiety and at least 10 protein subunits including POP1, POP3, POP4, POP5, POP6, POP7, POP8, RMP1, RPP1 and SNM1, many of which are shared with the RNase P complex.

It localises to the nucleus. The enzyme catalyses Endonucleolytic cleavage of RNA, removing 5'-extranucleotides from tRNA precursor.. Functionally, component of ribonuclease P, a protein complex that generates mature tRNA molecules by cleaving their 5'-ends. Also a component of RNase MRP, which cleaves pre-rRNA sequences. This is Ribonucleases P/MRP protein subunit POP7 (POP7) from Saccharomyces cerevisiae (strain ATCC 204508 / S288c) (Baker's yeast).